Here is a 226-residue protein sequence, read N- to C-terminus: PKHD-type hydroxylase PSPA7_5129 (226 aa).

A Fe2OG dioxygenase domain is found at 78-178 (KVFPPLFNCY…RYASFFWTQS (101 aa)). H96, D98, and H159 together coordinate Fe cation. Residue R169 coordinates 2-oxoglutarate.

Fe(2+) serves as cofactor. It depends on L-ascorbate as a cofactor.

The sequence is that of PKHD-type hydroxylase PSPA7_5129 from Pseudomonas paraeruginosa (strain DSM 24068 / PA7) (Pseudomonas aeruginosa (strain PA7)).